A 110-amino-acid polypeptide reads, in one-letter code: Mitochondrial pyruvate carrier 1 (110 aa).

Helical transmembrane passes span 20-36 (HFWGPIANWGFVAAGLV) and 44-61 (MISGNMSSAMCVYSALFM).

The protein belongs to the mitochondrial pyruvate carrier (MPC) (TC 2.A.105) family.

It localises to the mitochondrion inner membrane. Mediates the uptake of pyruvate into mitochondria. The chain is Mitochondrial pyruvate carrier 1 from Arabidopsis thaliana (Mouse-ear cress).